The chain runs to 1119 residues: DNA-directed RNA polymerase subunit beta (1119 aa).

The protein belongs to the RNA polymerase beta chain family. In terms of assembly, the RNAP catalytic core consists of 2 alpha, 1 beta, 1 beta' and 1 omega subunit. When a sigma factor is associated with the core the holoenzyme is formed, which can initiate transcription.

It catalyses the reaction RNA(n) + a ribonucleoside 5'-triphosphate = RNA(n+1) + diphosphate. In terms of biological role, DNA-dependent RNA polymerase catalyzes the transcription of DNA into RNA using the four ribonucleoside triphosphates as substrates. The sequence is that of DNA-directed RNA polymerase subunit beta from Thermus thermophilus (strain ATCC BAA-163 / DSM 7039 / HB27).